The following is a 385-amino-acid chain: Probable dual-specificity RNA methyltransferase RlmN (385 aa).

The interval 1–35 (MNVKEPAEEAAIQLRTERQRIEPEGEEQSEQPTDL) is disordered. Glu-121 (proton acceptor) is an active-site residue. A Radical SAM core domain is found at 132 to 367 (TRDRVTVCLS…AVIREERGQD (236 aa)). The cysteines at positions 139 and 372 are disulfide-linked. [4Fe-4S] cluster is bound by residues Cys-146, Cys-150, and Cys-153. S-adenosyl-L-methionine contacts are provided by residues 198-199 (GE), Ser-230, 253-255 (SLH), and Asn-329. Residue Cys-372 is the S-methylcysteine intermediate of the active site.

This sequence belongs to the radical SAM superfamily. RlmN family. The cofactor is [4Fe-4S] cluster.

It localises to the cytoplasm. It catalyses the reaction adenosine(2503) in 23S rRNA + 2 reduced [2Fe-2S]-[ferredoxin] + 2 S-adenosyl-L-methionine = 2-methyladenosine(2503) in 23S rRNA + 5'-deoxyadenosine + L-methionine + 2 oxidized [2Fe-2S]-[ferredoxin] + S-adenosyl-L-homocysteine. The enzyme catalyses adenosine(37) in tRNA + 2 reduced [2Fe-2S]-[ferredoxin] + 2 S-adenosyl-L-methionine = 2-methyladenosine(37) in tRNA + 5'-deoxyadenosine + L-methionine + 2 oxidized [2Fe-2S]-[ferredoxin] + S-adenosyl-L-homocysteine. In terms of biological role, specifically methylates position 2 of adenine 2503 in 23S rRNA and position 2 of adenine 37 in tRNAs. In Heliobacterium modesticaldum (strain ATCC 51547 / Ice1), this protein is Probable dual-specificity RNA methyltransferase RlmN.